Consider the following 416-residue polypeptide: Glutamyl-tRNA reductase (416 aa).

Residues 49 to 52, Ser105, 110 to 112, and Gln116 each bind substrate; these read TCNR and EPQ. Cys50 functions as the Nucleophile in the catalytic mechanism. NADP(+) is bound at residue 185–190; the sequence is GAGETI.

It belongs to the glutamyl-tRNA reductase family. Homodimer.

The enzyme catalyses (S)-4-amino-5-oxopentanoate + tRNA(Glu) + NADP(+) = L-glutamyl-tRNA(Glu) + NADPH + H(+). It participates in porphyrin-containing compound metabolism; protoporphyrin-IX biosynthesis; 5-aminolevulinate from L-glutamyl-tRNA(Glu): step 1/2. In terms of biological role, catalyzes the NADPH-dependent reduction of glutamyl-tRNA(Glu) to glutamate 1-semialdehyde (GSA). The chain is Glutamyl-tRNA reductase from Shewanella halifaxensis (strain HAW-EB4).